The chain runs to 508 residues: Early growth response protein 1 (508 aa).

Disordered regions lie at residues 18 to 78 (PQFL…ESFS) and 136 to 210 (MTNP…QYPP). A compositionally biased stretch (low complexity) spans 33–42 (NNSSSSSSSS). The segment covering 43–52 (SGGGGGGGSN) has biased composition (gly residues). Residues 139-164 (PPTSSSSAPSPAASSSSSASQSPPLS) show a composition bias toward low complexity. Lysine 278 is covalently cross-linked (Glycyl lysine isopeptide (Lys-Gly) (interchain with G-Cter in SUMO2)). Residues 292 to 311 (SRMRKYPNRPSKTPPHERPY) form a disordered region. 3 C2H2-type zinc fingers span residues 311–335 (YACP…IRIH), 341–363 (FQCR…IRTH), and 369–391 (FACD…TKIH). Positions 382–453 (DERKRHTKIH…SSTYPSPAHS (72 aa)) are disordered. Residues 386-396 (RHTKIHLRQKD) are compositionally biased toward basic residues. Over residues 402–450 (SVVASSAASSLSSYPSPVATSYPSPATTSFPSPVPTSYSSPGSSTYPSP) the composition is skewed to low complexity. Repeat copies occupy residues 413–420 (SSYPSPVA), 421–428 (TSYPSPAT), 429–436 (TSFPSPVP), 437–444 (TSYSSPGS), 445–452 (STYPSPAH), 453–460 (SGFPSPSV), and 462–468 (TTYASVP). The tract at residues 413-468 (SSYPSPVATSYPSPATTSFPSPVPTSYSSPGSSTYPSPAHSGFPSPSVATTYASVP) is 7 X 8 AA tandem repeats of [TS](2)-[FY]-[PS]-S-P-[GSAV]-X.

The protein belongs to the EGR C2H2-type zinc-finger protein family. As to quaternary structure, interacts with SNAI1 and SP1 upon 12-O-tetradecanoylphorbol-13-acetate (TPA) induction. As to expression, detected in kidney thick ascending limbs and collecting ducts (at protein level).

Its subcellular location is the nucleus. It localises to the cytoplasm. In terms of biological role, transcriptional regulator. Recognizes and binds to the DNA sequence 5'-GCG(T/G)GGGCG-3'(EGR-site) in the promoter region of target genes. Binds double-stranded target DNA, irrespective of the cytosine methylation status. Regulates the transcription of numerous target genes, and thereby plays an important role in regulating the response to growth factors, DNA damage, and ischemia. Plays a role in the regulation of cell survival, proliferation and cell death. Activates expression of p53/TP53 and TGFB1, and thereby helps prevent tumor formation. Required for normal progress through mitosis and normal proliferation of hepatocytes after partial hepatectomy. Mediates responses to ischemia and hypoxia; regulates the expression of proteins such as IL1B and CXCL2 that are involved in inflammatory processes and development of tissue damage after ischemia. Regulates biosynthesis of luteinizing hormone (LHB) in the pituitary. Regulates the amplitude of the expression rhythms of clock genes: BMAL1, PER2 and NR1D1 in the liver via the activation of PER1 (clock repressor) transcription. Regulates the rhythmic expression of core-clock gene BMAL1 in the suprachiasmatic nucleus (SCN). Regulates biosynthesis of glucocorticoid receptor GR/NR3C1 in the hippocampus and thereby may play a role in the behavioral and hypothalamic-pituitary-adrenal responses to stress in offspring. The chain is Early growth response protein 1 (Egr1) from Rattus norvegicus (Rat).